The primary structure comprises 562 residues: Probable malate:quinone oxidoreductase (562 aa).

Belongs to the MQO family. Requires FAD as cofactor.

The catalysed reaction is (S)-malate + a quinone = a quinol + oxaloacetate. The protein operates within carbohydrate metabolism; tricarboxylic acid cycle; oxaloacetate from (S)-malate (quinone route): step 1/1. This chain is Probable malate:quinone oxidoreductase, found in Stenotrophomonas maltophilia (strain K279a).